The following is a 226-amino-acid chain: Leucyl/phenylalanyl-tRNA--protein transferase (226 aa).

Belongs to the L/F-transferase family.

Its subcellular location is the cytoplasm. It carries out the reaction N-terminal L-lysyl-[protein] + L-leucyl-tRNA(Leu) = N-terminal L-leucyl-L-lysyl-[protein] + tRNA(Leu) + H(+). The catalysed reaction is N-terminal L-arginyl-[protein] + L-leucyl-tRNA(Leu) = N-terminal L-leucyl-L-arginyl-[protein] + tRNA(Leu) + H(+). The enzyme catalyses L-phenylalanyl-tRNA(Phe) + an N-terminal L-alpha-aminoacyl-[protein] = an N-terminal L-phenylalanyl-L-alpha-aminoacyl-[protein] + tRNA(Phe). In terms of biological role, functions in the N-end rule pathway of protein degradation where it conjugates Leu, Phe and, less efficiently, Met from aminoacyl-tRNAs to the N-termini of proteins containing an N-terminal arginine or lysine. The sequence is that of Leucyl/phenylalanyl-tRNA--protein transferase from Ectopseudomonas mendocina (strain ymp) (Pseudomonas mendocina).